The sequence spans 177 residues: MIDHSSARDAVTRLTRWADDFPQPGVRFADLTPVFSDADGFRVVVDALAACAPEADVIAAVDARGFLLGGGVARELGSGVVAVRKSGKLPPPVLSQSYTLEYGTATLEIPAGSIGLDGRSVLVVDDVLATGGTLDATARLVESAGARVIGVAVVLEIAALGGRERLGKYPLTSLVTV.

It belongs to the purine/pyrimidine phosphoribosyltransferase family. As to quaternary structure, homodimer.

It localises to the cytoplasm. The catalysed reaction is AMP + diphosphate = 5-phospho-alpha-D-ribose 1-diphosphate + adenine. The protein operates within purine metabolism; AMP biosynthesis via salvage pathway; AMP from adenine: step 1/1. In terms of biological role, catalyzes a salvage reaction resulting in the formation of AMP, that is energically less costly than de novo synthesis. The polypeptide is Adenine phosphoribosyltransferase (Rhodococcus jostii (strain RHA1)).